The primary structure comprises 460 residues: Inactive ubiquitin carboxyl-terminal hydrolase MINDY-4B (460 aa).

Residues 41–76 form a disordered region; it reads TNNSTPQNHEGNHTSADENEDGTGLSQPKGQGHLPS.

It belongs to the MINDY deubiquitinase family. FAM188 subfamily.

The protein is Inactive ubiquitin carboxyl-terminal hydrolase MINDY-4B of Homo sapiens (Human).